We begin with the raw amino-acid sequence, 348 residues long: 4-hydroxy-2-oxovalerate aldolase 1 (348 aa).

The region spanning 8-260 (ITVHDMTLRD…QTGVDVWAIQ (253 aa)) is the Pyruvate carboxyltransferase domain. 16–17 (RD) provides a ligand contact to substrate. Asp17 provides a ligand contact to Mn(2+). His20 acts as the Proton acceptor in catalysis. Ser170 and His199 together coordinate substrate. Mn(2+)-binding residues include His199 and His201. Residue Tyr290 coordinates substrate.

The protein belongs to the 4-hydroxy-2-oxovalerate aldolase family.

It catalyses the reaction (S)-4-hydroxy-2-oxopentanoate = acetaldehyde + pyruvate. This is 4-hydroxy-2-oxovalerate aldolase 1 from Cupriavidus metallidurans (strain ATCC 43123 / DSM 2839 / NBRC 102507 / CH34) (Ralstonia metallidurans).